A 37-amino-acid polypeptide reads, in one-letter code: Bacteriocin lactococcin MMFII (37 aa).

A disulfide bond links Cys9 and Cys14.

The protein resides in the secreted. In terms of biological role, bacteriocin active against Listeria monocytogenes and Lactococcus cremoris. This Lactococcus lactis subsp. lactis (Streptococcus lactis) protein is Bacteriocin lactococcin MMFII.